The primary structure comprises 7603 residues: Cysteine repeat modular protein B (7603 aa).

An N-linked (GlcNAc...) asparagine glycan is attached at asparagine 172. A helical transmembrane segment spans residues 223 to 243 (LVGFFLVPVFVVFFVLSSDAT). Disordered regions lie at residues 248–275 (GVGVLSARADREEKSSVSSSSRASSSPG) and 291–323 (RDTKAAGYTGRSSRRSARARRRRAADGGEGKGF). Low complexity predominate over residues 263-275 (SVSSSSRASSSPG). Basic residues predominate over residues 302-313 (SSRRSARARRRR). Asparagine 329, asparagine 589, asparagine 848, asparagine 1128, asparagine 1183, and asparagine 1402 each carry an N-linked (GlcNAc...) asparagine glycan. A disordered region spans residues 1554–1574 (VLRSRSGPSHPSSVSQPSPSF). Over residues 1557–1573 (SRSGPSHPSSVSQPSPS) the composition is skewed to low complexity. 5 N-linked (GlcNAc...) asparagine glycosylation sites follow: asparagine 1622, asparagine 2578, asparagine 2664, asparagine 3094, and asparagine 3126. The tract at residues 3316-3445 (SNAVPEADEN…SDLTTSQPED (130 aa)) is disordered. Acidic residues predominate over residues 3321–3340 (EADENQVESAEPEQNAEGET). Residues 3342-3360 (EQGAEEAGGNAAEPGAESG) show a composition bias toward low complexity. N-linked (GlcNAc...) asparagine glycosylation is found at asparagine 3546, asparagine 4367, asparagine 4823, asparagine 4901, asparagine 5186, asparagine 5546, and asparagine 5666. The tract at residues 5758–5799 (LAESRSDDGTVGDDVDLDDNALSGTTNSGWTTSSSNSERVRK) is disordered. The segment covering 5767 to 5776 (TVGDDVDLDD) has biased composition (acidic residues). A compositionally biased stretch (low complexity) spans 5780 to 5794 (SGTTNSGWTTSSSNS). Residues asparagine 5806, asparagine 5876, asparagine 5998, asparagine 6055, and asparagine 6369 are each glycosylated (N-linked (GlcNAc...) asparagine). The segment at 6043–6115 (GEADHTPADG…EASEAESVSA (73 aa)) is disordered. The span at 6051–6060 (DGSSNSSEDS) shows a compositional bias: polar residues. Residues 6391–6405 (EFTDTGPAPDDHTDE) show a composition bias toward basic and acidic residues. Residues 6391–6436 (EFTDTGPAPDDHTDEGGANLDSTGGSGEPSSSAPVDPSGENEGQLL) form a disordered region. Residues 6410-6423 (LDSTGGSGEPSSSA) show a composition bias toward polar residues. A glycan (N-linked (GlcNAc...) asparagine) is linked at asparagine 6453. Transmembrane regions (helical) follow at residues 6520–6540 (IFILMRLVVCGIIWIITALTI), 6552–6572 (VLIRIVMSHMFFLSVYGLMPA), 6578–6598 (LAGWASIYRLFFFEFYFALHP), 6627–6647 (IFVPFIDAVLLTIIGAICVAT), 6770–6790 (LILGGVGLLVWGVGSIAGFVA), 6831–6851 (CVALIITMYVHANASGAQEIF), 6888–6908 (GLMVNIIIGVIFQGSYYFEVF), and 6912–6932 (GAIPLAVAIFYYLYVLWSLFV). A glycan (N-linked (GlcNAc...) asparagine) is linked at asparagine 7013. Residues 7017 to 7037 (FVAALSDSLSQLVIAWCQFTI) traverse the membrane as a helical segment. Asparagine 7061 is a glycosylation site (N-linked (GlcNAc...) asparagine). Residues 7174–7242 (APQLRKENHA…RGLIESEIDD (69 aa)) are a coiled coil. The interval 7379-7603 (AAPAAGLRSH…LKKPGSPKQE (225 aa)) is disordered. The segment covering 7408–7417 (LGTNLSTPSA) has biased composition (polar residues). A glycan (N-linked (GlcNAc...) asparagine) is linked at asparagine 7411. 3 stretches are compositionally biased toward low complexity: residues 7474–7496 (PTPSRSPSGTTRTVGSVVRSVTP), 7509–7541 (SEAPLISPSASSLASPRSLSPLTERRGSQSSDL), and 7560–7582 (GEAAPAEAPSPSPRSSSPLAAQP).

Component of a complex, at least composed of cysteine repeat modular protein A (CRMPa), cysteine repeat modular protein B (CRMPb), micronemal protein 15 (MIC15) and thrombospondin type 1 domain-containing protein (TSP1).

The protein localises to the cell membrane. It localises to the endoplasmic reticulum. It is found in the golgi apparatus. Its function is as follows. Required for triggering rhoptry secretion. Plays a role in host cell invasion. The sequence is that of Cysteine repeat modular protein B from Toxoplasma gondii.